A 341-amino-acid polypeptide reads, in one-letter code: MDVGELLEDVLRIYSPSHGEADLAKYLLEYLKRFVPDVWIDEAGNVIAVKGSGGPVVWLHAHMDTVPGPLPVKREGGVVWGRGAVDDKGPLVAYLKAFLDSNPRGTLVLALVTAEEDDSAGTEALLRGGPPRPDYVFVGEPTNLHIAYAYRGGAKVYIELESRGGHASSPIYDNIVEELFAVYQEVKRALGHAERYDAFTVTPTIIQCGEAPNKVPTKCVMVLDVRIPPGKSCRDLAQALPPKARAGPCTEPVEVSPTNPAARALTRALLKLGVEPKLSRKWGTADFNLLVSLTKNIAAFGPGDPALAHSEDERIDIAQVELAAKALKLAVEELGIIPRRL.

Histidine 62 provides a ligand contact to Zn(2+). Residue aspartate 64 is part of the active site. Aspartate 86 contributes to the Zn(2+) binding site. Glutamate 115 acts as the Proton acceptor in catalysis. Zn(2+) is bound by residues glutamate 116, glutamate 140, and histidine 309.

This sequence belongs to the peptidase M20A family. LysK subfamily. Zn(2+) is required as a cofactor. It depends on Co(2+) as a cofactor.

It localises to the cytoplasm. The enzyme catalyses [amino-group carrier protein]-C-terminal-gamma-(L-lysyl)-L-glutamate + H2O = [amino-group carrier protein]-C-terminal-L-glutamate + L-lysine. It catalyses the reaction [amino-group carrier protein]-C-terminal-gamma-(L-ornithyl)-L-glutamate + H2O = [amino-group carrier protein]-C-terminal-L-glutamate + L-ornithine. Its pathway is amino-acid biosynthesis; L-lysine biosynthesis via AAA pathway; L-lysine from L-alpha-aminoadipate (Thermus route): step 5/5. It participates in amino-acid biosynthesis; L-arginine biosynthesis. In terms of biological role, catalyzes the release of L-lysine from [LysW]-gamma-L-lysine and the release of L-ornithine from [LysW]-L-ornithine. This chain is Putative [LysW]-lysine/[LysW]-ornithine hydrolase, found in Pyrobaculum aerophilum (strain ATCC 51768 / DSM 7523 / JCM 9630 / CIP 104966 / NBRC 100827 / IM2).